We begin with the raw amino-acid sequence, 399 residues long: Phosphoglycerate kinase (399 aa).

Residues 22-24 (DFN), R38, 61-64 (HLGR), R120, and R153 contribute to the substrate site. ATP-binding positions include K204, E326, and 353–356 (GGDT).

This sequence belongs to the phosphoglycerate kinase family. In terms of assembly, monomer.

It is found in the cytoplasm. The catalysed reaction is (2R)-3-phosphoglycerate + ATP = (2R)-3-phospho-glyceroyl phosphate + ADP. It participates in carbohydrate degradation; glycolysis; pyruvate from D-glyceraldehyde 3-phosphate: step 2/5. This chain is Phosphoglycerate kinase, found in Geotalea daltonii (strain DSM 22248 / JCM 15807 / FRC-32) (Geobacter daltonii).